A 419-amino-acid polypeptide reads, in one-letter code: L-rhamnose isomerase (419 aa).

3 residues coordinate Mn(2+): H262, D294, and D296.

This sequence belongs to the rhamnose isomerase family. As to quaternary structure, homotetramer. Requires Mn(2+) as cofactor.

It localises to the cytoplasm. It carries out the reaction L-rhamnopyranose = L-rhamnulose. It participates in carbohydrate degradation; L-rhamnose degradation; glycerone phosphate from L-rhamnose: step 1/3. Its function is as follows. Catalyzes the interconversion of L-rhamnose and L-rhamnulose. This chain is L-rhamnose isomerase, found in Salmonella paratyphi A (strain AKU_12601).